A 477-amino-acid chain; its full sequence is Bifunctional protein HldE (477 aa).

Positions 1–318 (MKVTLPEFER…ENAVRGRADT (318 aa)) are ribokinase. Position 179 is an N6-acetyllysine (lysine 179). 195–198 (NLSE) contacts ATP. The active site involves aspartate 264. The cytidylyltransferase stretch occupies residues 344-477 (MTNGVFDILH…IKKIQQDKKG (134 aa)).

It in the N-terminal section; belongs to the carbohydrate kinase PfkB family. The protein in the C-terminal section; belongs to the cytidylyltransferase family. Homodimer.

It carries out the reaction D-glycero-beta-D-manno-heptose 7-phosphate + ATP = D-glycero-beta-D-manno-heptose 1,7-bisphosphate + ADP + H(+). The catalysed reaction is D-glycero-beta-D-manno-heptose 1-phosphate + ATP + H(+) = ADP-D-glycero-beta-D-manno-heptose + diphosphate. It functions in the pathway nucleotide-sugar biosynthesis; ADP-L-glycero-beta-D-manno-heptose biosynthesis; ADP-L-glycero-beta-D-manno-heptose from D-glycero-beta-D-manno-heptose 7-phosphate: step 1/4. Its pathway is nucleotide-sugar biosynthesis; ADP-L-glycero-beta-D-manno-heptose biosynthesis; ADP-L-glycero-beta-D-manno-heptose from D-glycero-beta-D-manno-heptose 7-phosphate: step 3/4. Functionally, catalyzes the phosphorylation of D-glycero-D-manno-heptose 7-phosphate at the C-1 position to selectively form D-glycero-beta-D-manno-heptose-1,7-bisphosphate. Catalyzes the ADP transfer from ATP to D-glycero-beta-D-manno-heptose 1-phosphate, yielding ADP-D-glycero-beta-D-manno-heptose. The polypeptide is Bifunctional protein HldE (Shigella sonnei (strain Ss046)).